We begin with the raw amino-acid sequence, 155 residues long: 6,7-dimethyl-8-ribityllumazine synthase (155 aa).

5-amino-6-(D-ribitylamino)uracil contacts are provided by residues Phe-23, 57–59 (AFE), and 83–85 (AVI). 88-89 (AT) is a binding site for (2S)-2-hydroxy-3-oxobutyl phosphate. Residue His-91 is the Proton donor of the active site. Phe-114 is a 5-amino-6-(D-ribitylamino)uracil binding site. Residue Arg-128 participates in (2S)-2-hydroxy-3-oxobutyl phosphate binding.

It belongs to the DMRL synthase family.

It carries out the reaction (2S)-2-hydroxy-3-oxobutyl phosphate + 5-amino-6-(D-ribitylamino)uracil = 6,7-dimethyl-8-(1-D-ribityl)lumazine + phosphate + 2 H2O + H(+). The protein operates within cofactor biosynthesis; riboflavin biosynthesis; riboflavin from 2-hydroxy-3-oxobutyl phosphate and 5-amino-6-(D-ribitylamino)uracil: step 1/2. Catalyzes the formation of 6,7-dimethyl-8-ribityllumazine by condensation of 5-amino-6-(D-ribitylamino)uracil with 3,4-dihydroxy-2-butanone 4-phosphate. This is the penultimate step in the biosynthesis of riboflavin. The chain is 6,7-dimethyl-8-ribityllumazine synthase from Leptospira biflexa serovar Patoc (strain Patoc 1 / Ames).